We begin with the raw amino-acid sequence, 218 residues long: Copper acquisition factor BIM1 (218 aa).

Positions 1–19 (MFALKFILITSFIASTALA) are cleaved as a signal peptide. Cu(2+) contacts are provided by His20 and His65. Intrachain disulfides connect Cys40–Cys144 and Cys110–Cys161. N-linked (GlcNAc...) asparagine glycans are attached at residues Asn87, Asn91, and Asn124. Residue Asp138 participates in Cu(2+) binding. Residues Asn158 and Asn170 are each glycosylated (N-linked (GlcNAc...) asparagine). The tract at residues 160–194 (TCTDDASRTSNASSTSSGSATATSAAATSSSSGTS) is disordered. The span at 167-194 (RTSNASSTSSGSATATSAAATSSSSGTS) shows a compositional bias: low complexity. Ser190 carries GPI-anchor amidated serine lipidation. A propeptide spans 191–218 (SGTSGAIKEVVGLGALSLALGIAGLIIL) (removed in mature form).

It belongs to the X325 family. The cofactor is Cu(2+).

Its subcellular location is the cell membrane. Lytic polysaccharide monooxygenase-like protein that has diverged to biological functions other than polysaccharide degradation since it does not perform oxidative cleavage of polysaccharides. Cell surface-bound protein that functions in the copper-accumulation pathway shared by the CUF1-dependent copper transporter CTR1. Involved in maintaining cell wall integrity during copper deficiency. Binds Cu(2+) with an estimated 1:1 stoichiometry and might serve as an extracellular copper ligand. FRE4 and FRE7 metalloreductases probably function together with CTR1 and BIM1 to liberate the Cu(2+) bound to the BIM1 copper-binding site for subsequent import of Cu(+) into the cell by CTR1, via the reduction of BIM1-bound Cu(2+) to Cu(+) to reduce binding affinity for BIM1 but increase affinity for CTR1. Facilitates copper acquisition in the brain of mammalian hosts and acts as a copper-dependent virulence trait in fungal meningitis. While BIM1 plays a critical role in cryptococcal meningitis, at least in part through its role in copper acquisition, it could play additional roles during copper limitation or as a means to invade and colonize host tissues in the brain, by compromising host carbohydrate integrity via its lytic polysaccharide monooxygenase (LPMO) activity, which has still to be determined. This chain is Copper acquisition factor BIM1, found in Cryptococcus neoformans var. neoformans serotype D (strain JEC21 / ATCC MYA-565) (Filobasidiella neoformans).